Consider the following 375-residue polypeptide: Alcohol dehydrogenase class-3 chain H (375 aa).

Ala-1 carries the post-translational modification N-acetylalanine. Residues Cys-46, His-68, Cys-98, Cys-101, Cys-104, Cys-112, and Cys-175 each contribute to the Zn(2+) site.

Belongs to the zinc-containing alcohol dehydrogenase family. Class-III subfamily. In terms of assembly, homodimer or heterodimer with L chain. Requires Zn(2+) as cofactor.

The protein localises to the cytoplasm. It carries out the reaction a primary alcohol + NAD(+) = an aldehyde + NADH + H(+). It catalyses the reaction a secondary alcohol + NAD(+) = a ketone + NADH + H(+). The enzyme catalyses S-(hydroxymethyl)glutathione + NADP(+) = S-formylglutathione + NADPH + H(+). The catalysed reaction is S-(hydroxymethyl)glutathione + NAD(+) = S-formylglutathione + NADH + H(+). Its function is as follows. Class-III ADH is remarkably ineffective in oxidizing ethanol, but it readily catalyzes the oxidation of long-chain primary alcohols and the oxidation of S-(hydroxymethyl) glutathione. This is Alcohol dehydrogenase class-3 chain H from Gadus morhua (Atlantic cod).